The following is a 1190-amino-acid chain: Tight junction protein 2 (1190 aa).

Serine 16 bears the Phosphoserine mark. Positions 33–120 (TVTLQKDSKR…VAAIVVKRPR (88 aa)) constitute a PDZ 1 domain. Serine 130, serine 150, serine 153, serine 163, serine 168, serine 170, serine 174, serine 200, serine 220, serine 232, serine 244, serine 266, serine 325, serine 398, serine 400, serine 406, serine 415, serine 424, serine 430, and serine 431 each carry phosphoserine. Residues 152–306 (RSGYSERSRL…PEPRGRPGPI (155 aa)) form a disordered region. Residues 169-291 (RSWEDSPERG…PRSRSREHPH (123 aa)) show a composition bias toward basic and acidic residues. Positions 307–385 (GVLLMKSRAN…KLQLVVLRDS (79 aa)) constitute a PDZ 2 domain. The interval 408-506 (IESNRSFSPE…RPSPEDEAIY (99 aa)) is disordered. The segment covering 415–446 (SPEERRHQYSDYDYHSSSEKLKERPSSREDTP) has biased composition (basic and acidic residues). Residue threonine 455 is modified to Phosphothreonine. A Phosphoserine modification is found at serine 499. In terms of domain architecture, PDZ 3 spans 509-590 (NTKMVRFKKG…GEMVTILAQS (82 aa)). Tyrosine 574 is subject to Phosphotyrosine. Positions 604 to 669 (GDSFFIRSHF…PNKSRAEQMA (66 aa)) constitute an SH3 domain. A Guanylate kinase-like domain is found at 678–876 (NAGDRADFWR…WFGSLKDTIQ (199 aa)). Serine 702 and serine 902 each carry phosphoserine. Threonine 905 bears the Phosphothreonine mark. Residues serine 913 and serine 920 each carry the phosphoserine modification. Disordered stretches follow at residues 920–1079 (SDFE…KSVL) and 1105–1190 (NARI…DTEL). A phosphothreonine mark is found at threonine 925 and threonine 933. Residues 956–967 (VQHEESIRKPSP) are compositionally biased toward basic and acidic residues. A phosphoserine mark is found at serine 966, serine 978, serine 986, serine 1006, serine 1067, and serine 1068. Positions 994–1014 (EPPKAKTQNKEESYDFSKSYE) are enriched in basic and acidic residues. The segment covering 1060-1072 (EGEEVGESSEEQD) has biased composition (acidic residues). Phosphotyrosine is present on tyrosine 1118. Threonine 1131 bears the Phosphothreonine mark. Phosphoserine is present on residues serine 1147 and serine 1159. The segment covering 1166-1175 (YRQQLSEHSK) has biased composition (basic and acidic residues). Residues 1188-1190 (TEL) form an interaction with SCRIB region.

Belongs to the MAGUK family. Homodimer. Interacts (via PDZ2 domain) with TJP1/ZO1 (via PDZ2 domain). Interacts with OCLN. Interacts with UBN1. Interacts with SAFB in the nucleus. Interacts with SCRIB. Interacts with USP53 (via the C-terminal region). Interacts with claudins, including CLDN1, CLDN2, CLDN3, CLDN5 and CLDN7. Interacts with CLDN18. Interacts (via N-terminus) with CTNNA1. In terms of tissue distribution, this protein is found in epithelial cell junctions. Isoform A1 is abundant in the heart and brain. Detected in brain and skeletal muscle. It is present almost exclusively in normal tissues. Isoform C1 is expressed at high level in the kidney, pancreas, heart and placenta. Not detected in brain and skeletal muscle. Found in normal as well as in most neoplastic tissues.

Its subcellular location is the cell junction. It is found in the adherens junction. The protein resides in the cell membrane. The protein localises to the tight junction. It localises to the nucleus. Plays a role in tight junctions and adherens junctions. Acts as a positive regulator of RANKL-induced osteoclast differentiation, potentially via mediating downstream transcriptional activity. This Homo sapiens (Human) protein is Tight junction protein 2.